Reading from the N-terminus, the 819-residue chain is Eukaryotic translation initiation factor 3 subunit C (819 aa).

A disordered region spans residues 1–106; sequence MSRFFLKTYE…DSSDEEDGKK (106 aa). Composition is skewed to acidic residues over residues 17-41 and 47-59; these read GEEEDLLSQSEEDLVSSSSEEELSD and DSDESSDNDEDND. The 176-residue stretch at 620-795 folds into the PCI domain; that stretch reads FHQHINLDLI…EYIIFERGEE (176 aa).

Belongs to the eIF-3 subunit C family. As to quaternary structure, component of the eukaryotic translation initiation factor 3 (eIF-3) complex.

It localises to the cytoplasm. Functionally, component of the eukaryotic translation initiation factor 3 (eIF-3) complex, which is involved in protein synthesis of a specialized repertoire of mRNAs and, together with other initiation factors, stimulates binding of mRNA and methionyl-tRNAi to the 40S ribosome. The eIF-3 complex specifically targets and initiates translation of a subset of mRNAs involved in cell proliferation. The sequence is that of Eukaryotic translation initiation factor 3 subunit C from Kluyveromyces lactis (strain ATCC 8585 / CBS 2359 / DSM 70799 / NBRC 1267 / NRRL Y-1140 / WM37) (Yeast).